A 433-amino-acid polypeptide reads, in one-letter code: Bifunctional urease accessory protein UreEF (433 aa).

The urease accessory protein UreE stretch occupies residues 1 to 200 (MKIANTFIKR…VMATAASTAS (200 aa)). The interval 200–433 (SMTPSLDAGQ…ETQFSRLFRS (234 aa)) is urease accessory protein UreF.

This sequence in the N-terminal section; belongs to the UreE family. The protein in the C-terminal section; belongs to the UreF family. As to quaternary structure, ureD, UreF and UreG form a complex that acts as a GTP-hydrolysis-dependent molecular chaperone, activating the urease apoprotein by helping to assemble the nickel containing metallocenter of UreC. The UreE protein probably delivers the nickel.

Its subcellular location is the cytoplasm. Involved in urease metallocenter assembly. Binds nickel. Probably functions as a nickel donor during metallocenter assembly. Its function is as follows. Required for maturation of urease via the functional incorporation of the urease nickel metallocenter. The protein is Bifunctional urease accessory protein UreEF (ureEF) of Bordetella bronchiseptica (Alcaligenes bronchisepticus).